We begin with the raw amino-acid sequence, 393 residues long: MTTQNQNTHQQTVFAMVVGEHSGDTLGAGLITSLRQTHPHAKFIGIGGPKMLALGFESLFAMDELSVMGLVEVLGRIRRLLHVRKTLTDFFITNKPDVFIGIDAPDFNIGLELKLKVKGIKTVHYVSPSVWAWREKRIFKIAKATDMVLALLPFEKAFYDKHNVPCTFVGHPLADDIPMQSDKVLARDKLGLAQDKKILALMPGSRGGELSRLLEDFFESAKQLQAQDSELLFVAPMISEQRANQFNALKAELAPDLDIEIVLNQTQQVMAASDCLLTASGTVTLEAALIKRPMVICYKFSPITFFLGRRFVKLKWFSLPNLLTNKSLVPELLQKDVCPENIVPLVKERLYQDQSQLNDSFTAIHQQLKCDASKQAAKAVLDVLSSKLLSNNK.

Belongs to the LpxB family.

It catalyses the reaction a lipid X + a UDP-2-N,3-O-bis[(3R)-3-hydroxyacyl]-alpha-D-glucosamine = a lipid A disaccharide + UDP + H(+). It functions in the pathway bacterial outer membrane biogenesis; LPS lipid A biosynthesis. Condensation of UDP-2,3-diacylglucosamine and 2,3-diacylglucosamine-1-phosphate to form lipid A disaccharide, a precursor of lipid A, a phosphorylated glycolipid that anchors the lipopolysaccharide to the outer membrane of the cell. This is Lipid-A-disaccharide synthase from Colwellia psychrerythraea (strain 34H / ATCC BAA-681) (Vibrio psychroerythus).